The chain runs to 866 residues: Probable outer membrane usher protein ElfC (866 aa).

The signal sequence occupies residues 1-35 (MYRTHRQHSLLSSGGVPSFIGGLVVFVSAAFNAQA).

It belongs to the fimbrial export usher family.

Its subcellular location is the cell outer membrane. Functionally, part of the elfADCG-ycbUVF fimbrial operon, which promotes adhesion of bacteria to different abiotic surfaces. Could be involved in the export and assembly of the ElfA fimbrial subunits across the outer membrane. The polypeptide is Probable outer membrane usher protein ElfC (elfC) (Escherichia coli (strain K12)).